Consider the following 1581-residue polypeptide: MPLAFCGSENHSAAYRVDQGVLNNGCFVDALNVVPHVFLLFITFPILFIGWGSQSSKVHIHHSTWLHFPGHNLRWILTFMLLFVLVCEIAEGILSDGVTESHHLHLYMPAGMAFMAAVTSVVYYHNIETSNFPKLLIALLVYWTLAFITKTIKFVKFLDHAIGFSQLRFCLTGLLVILYGMLLLVEVNVIRVRRYIFFKTPREVKPPEDLQDLGVRFLQPFVNLLSKGTYWWMNAFIKTAHKKPIDLRAIGKLPIAMRALTNYQRLCEAFDAQVRKDIQGTQGARAIWQALSHAFGRRLVLSSTFRILADLLGFAGPLCIFGIVDHLGKENDVFQPKTQFLGVYFVSSQEFLANAYVLAVLLFLALLLQRTFLQASYYVAIETGINLRGAIQTKIYNKIMHLSTSNLSMGEMTAGQICNLVAIDTNQLMWFFFLCPNLWAMPVQIIVGVILLYYILGVSALIGAAVIILLAPVQYFVATKLSQAQRSTLEYSNERLKQTNEMLRGIKLLKLYAWENIFRTRVETTRRKEMTSLRAFAIYTSISIFMNTAIPIAAVLITFVGHVSFFKEADFSPSVAFASLSLFHILVTPLFLLSSVVRSTVKALVSVQKLSEFLSSAEIREEQCAPHEPTPQGPASKYQAVPLRVVNRKRPAREDCRGLTGPLQSLVPSADGDADNCCVQIMGGYFTWTPDGIPTLSNITIRIPRGQLTMIVGQVGCGKSSLLLAALGEMQKVSGAVFWSSLPDSEIGEDPSPERETATDLDIRKRGPVAYASQKPWLLNATVEENIIFESPFNKQRYKMVIEACSLQPDIDILPHGDQTQIGERGINLSGGQRQRISVARALYQHANVVFLDDPFSALDIHLSDHLMQAGILELLRDDKRTVVLVTHKLQYLPHADWIIAMKDGTIQREGTLKDFQRSECQLFEHWKTLMNRQDQELEKETVTERKATEPPQGLSRAMSSRDGLLQDEEEEEEEAAESEEDDNLSSMLHQRAEIPWRACAKYLSSAGILLLSLLVFSQLLKHMVLVAIDYWLAKWTDSALTLTPAARNCSLSQECTLDQTVYAMVFTVLCSLGIVLCLVTSVTVEWTGLKVAKRLHRSLLNRIILAPMRFFETTPLGSILNRFSSDCNTIDQHIPSTLECLSRSTLLCVSALAVISYVTPVFLVALLPLAIVCYFIQKYFRVASRDLQQLDDTTQLPLLSHFAETVEGLTTIRAFRYEARFQQKLLEYTDSNNIASLFLTAANRWLEVRMEYIGACVVLIAAVTSISNSLHRELSAGLVGLGLTYALMVSNYLNWMVRNLADMELQLGAVKRIHGLLKTEAESYEGLLAPSLIPKNWPDQGKIQIQNLSVRYDSSLKPVLKHVNALIAPGQKIGICGRTGSGKSSFSLAFFRMVDTFEGHIIIDGIDIAKLPLHTLRSRLSIILQDPVLFSGTIRFNLDPERKCSDSTLWEALEIAQLKLVVKALPGGLDAIITEGGENFSQGQRQLFCLARAFVRKTSIFIMDEATASIDMATENILQKVVMTAFADRTVVTIAHRVHTILSADLVIVLKRGAILEFDKPEKLLSRKDSVFASFVRADK.

The Extracellular segment spans residues 1–30 (MPLAFCGSENHSAAYRVDQGVLNNGCFVDA). Cys-6 and Cys-26 are disulfide-bonded. The N-linked (GlcNAc...) asparagine glycan is linked to Asn-10. Residues 31-47 (LNVVPHVFLLFITFPIL) form a helical membrane-spanning segment. Topologically, residues 48–72 (FIGWGSQSSKVHIHHSTWLHFPGHN) are cytoplasmic. Residues 73 to 89 (LRWILTFMLLFVLVCEI) form a helical membrane-spanning segment. The Extracellular portion of the chain corresponds to 90-106 (AEGILSDGVTESHHLHL). The helical transmembrane segment at 107–123 (YMPAGMAFMAAVTSVVY) threads the bilayer. Over 124 to 136 (YHNIETSNFPKLL) the chain is Cytoplasmic. The helical transmembrane segment at 137–153 (IALLVYWTLAFITKTIK) threads the bilayer. The Extracellular segment spans residues 154–169 (FVKFLDHAIGFSQLRF). A helical transmembrane segment spans residues 170–186 (CLTGLLVILYGMLLLVE). The Cytoplasmic portion of the chain corresponds to 187 to 303 (VNVIRVRRYI…AFGRRLVLSS (117 aa)). The ABC transmembrane type-1 1 domain maps to 299 to 602 (LVLSSTFRIL…LSSVVRSTVK (304 aa)). A helical membrane pass occupies residues 304–319 (TFRILADLLGFAGPLC). Residues 320–356 (IFGIVDHLGKENDVFQPKTQFLGVYFVSSQEFLANAY) are Extracellular-facing. The chain crosses the membrane as a helical span at residues 357–372 (VLAVLLFLALLLQRTF). At 373–438 (LQASYYVAIE…MWFFFLCPNL (66 aa)) the chain is on the cytoplasmic side. A helical membrane pass occupies residues 439–454 (WAMPVQIIVGVILLYY). At 455-460 (ILGVSA) the chain is on the extracellular side. Residues 461–473 (LIGAAVIILLAPV) form a helical membrane-spanning segment. Residues 474–541 (QYFVATKLSQ…SLRAFAIYTS (68 aa)) are Cytoplasmic-facing. Residues 542 to 557 (ISIFMNTAIPIAAVLI) traverse the membrane as a helical segment. Topologically, residues 558–576 (TFVGHVSFFKEADFSPSVA) are extracellular. A helical membrane pass occupies residues 577–592 (FASLSLFHILVTPLFL). At 593 to 1012 (LSSVVRSTVK…YLSSAGILLL (420 aa)) the chain is on the cytoplasmic side. The ABC transporter 1 domain occupies 679-929 (VQIMGGYFTW…ECQLFEHWKT (251 aa)). 4 residues coordinate ATP: Trp-688, Gly-716, Ser-720, and Ser-721. Ser-720 provides a ligand contact to Mg(2+). Gln-774 is a Mg(2+) binding site. Residues 935-949 (DQELEKETVTERKAT) show a composition bias toward basic and acidic residues. The disordered stretch occupies residues 935 to 987 (DQELEKETVTERKATEPPQGLSRAMSSRDGLLQDEEEEEEEAAESEEDDNLSS). A compositionally biased stretch (acidic residues) spans 966-984 (LQDEEEEEEEAAESEEDDN). Residues 1012–1306 (LSLLVFSQLL…MVRNLADMEL (295 aa)) enclose the ABC transmembrane type-1 2 domain. The chain crosses the membrane as a helical span at residues 1013–1030 (SLLVFSQLLKHMVLVAID). Topologically, residues 1031-1066 (YWLAKWTDSALTLTPAARNCSLSQECTLDQTVYAMV) are extracellular. The N-linked (GlcNAc...) asparagine glycan is linked to Asn-1049. The helical transmembrane segment at 1067 to 1083 (FTVLCSLGIVLCLVTSV) threads the bilayer. At 1084–1142 (TVEWTGLKVAKRLHRSLLNRIILAPMRFFETTPLGSILNRFSSDCNTIDQHIPSTLECL) the chain is on the cytoplasmic side. The chain crosses the membrane as a helical span at residues 1143–1160 (SRSTLLCVSALAVISYVT). Pro-1161 is a topological domain (extracellular). Residues 1162 to 1174 (VFLVALLPLAIVC) form a helical membrane-spanning segment. Over 1175–1248 (YFIQKYFRVA…FLTAANRWLE (74 aa)) the chain is Cytoplasmic. A helical membrane pass occupies residues 1249–1264 (VRMEYIGACVVLIAAV). At 1265–1280 (TSISNSLHRELSAGLV) the chain is on the extracellular side. The chain crosses the membrane as a helical span at residues 1281–1296 (GLGLTYALMVSNYLNW). Residues 1297–1581 (MVRNLADMEL…VFASFVRADK (285 aa)) are Cytoplasmic-facing. Residues 1344–1578 (IQIQNLSVRY…KDSVFASFVR (235 aa)) enclose the ABC transporter 2 domain. ADP-binding residues include Thr-1380, Gly-1381, Gly-1383, Lys-1384, Ser-1385, and Ser-1386. Ser-1482 is an ATP binding site.

This sequence belongs to the ABC transporter superfamily. ABCC family. Conjugate transporter (TC 3.A.1.208) subfamily. Forms an heterooctamer with KCNJ11; four ABCC8/SUR1 molecules interact with one KCNJ11 homotetramer.

The protein localises to the cell membrane. Its activity is regulated as follows. KATP channels are regulated by cytoplasmic ATP/ADP ratios; ATP inhibits the channel by closing the pore, while ADP activates the channel. Activated by phosphatidylinositol 4,5-biphosphate (PtdIns(4,5)P2). Its function is as follows. Regulator subunit of pancreatic ATP-sensitive potassium channel (KATP), playing a major role in the regulation of insulin release. In pancreatic cells, it forms KATP channels with KCNJ11; KCNJ11 forms the channel pore while ABCC8 is required for activation and regulation. The sequence is that of ATP-binding cassette sub-family C member 8 (ABCC8) from Homo sapiens (Human).